The sequence spans 79 residues: Large ribosomal subunit protein uL24 (79 aa).

Belongs to the universal ribosomal protein uL24 family. As to quaternary structure, part of the 50S ribosomal subunit.

Functionally, one of two assembly initiator proteins, it binds directly to the 5'-end of the 23S rRNA, where it nucleates assembly of the 50S subunit. In terms of biological role, one of the proteins that surrounds the polypeptide exit tunnel on the outside of the subunit. This chain is Large ribosomal subunit protein uL24, found in Lactobacillus gasseri (strain ATCC 33323 / DSM 20243 / BCRC 14619 / CIP 102991 / JCM 1131 / KCTC 3163 / NCIMB 11718 / NCTC 13722 / AM63).